A 28-amino-acid chain; its full sequence is Alkaline serine protease NJP (28 aa).

With respect to regulation, inhibited by PMSF. Not or very weakly inhibited by EDTA, EGTA, beta-mercaptoethanol, benzamidine, aprotinin, iodoacetic acid, pepstatin A and SBTI. Functionally, alkaline thrombin-like serine protease. Has fibrinolytic and fibrinogenolytic but not plasminogenolytic activity. Cleaves fibrinogen chains Aalpha, Bbeta and gamma chains in that order. Cleaves after Arg and Lys residues. The protein is Alkaline serine protease NJP of Hediste japonica (Polychaete worm).